We begin with the raw amino-acid sequence, 338 residues long: Aspartate-semialdehyde dehydrogenase (338 aa).

Residues 13-16 and 41-42 each bind NADP(+); these read TGNV and NS. Residue Arg101 participates in phosphate binding. The active-site Acyl-thioester intermediate is the Cys132. Gln159 provides a ligand contact to substrate. NADP(+) is bound by residues 162-163 and Pro187; that span reads SG. Phosphate is bound at residue Lys216. Arg237 contributes to the substrate binding site. The Proton acceptor role is filled by His244. Asn317 lines the NADP(+) pocket.

The protein belongs to the aspartate-semialdehyde dehydrogenase family. In terms of assembly, homodimer.

It carries out the reaction L-aspartate 4-semialdehyde + phosphate + NADP(+) = 4-phospho-L-aspartate + NADPH + H(+). The protein operates within amino-acid biosynthesis; L-lysine biosynthesis via DAP pathway; (S)-tetrahydrodipicolinate from L-aspartate: step 2/4. Its pathway is amino-acid biosynthesis; L-methionine biosynthesis via de novo pathway; L-homoserine from L-aspartate: step 2/3. It participates in amino-acid biosynthesis; L-threonine biosynthesis; L-threonine from L-aspartate: step 2/5. In terms of biological role, catalyzes the NADPH-dependent formation of L-aspartate-semialdehyde (L-ASA) by the reductive dephosphorylation of L-aspartyl-4-phosphate. This is Aspartate-semialdehyde dehydrogenase from Rickettsia typhi (strain ATCC VR-144 / Wilmington).